Consider the following 505-residue polypeptide: Catalase (505 aa).

The segment at 1–25 (MSQQDKKLTGVFGHPVSDRENSMTA) is disordered. Catalysis depends on residues histidine 56 and asparagine 129. Tyrosine 339 provides a ligand contact to heme.

It belongs to the catalase family. In terms of assembly, homodimer. Heme is required as a cofactor.

It catalyses the reaction 2 H2O2 = O2 + 2 H2O. Decomposes hydrogen peroxide into water and oxygen; serves to protect cells from the toxic effects of hydrogen peroxide. This Staphylococcus aureus (strain MSSA476) protein is Catalase (katA).